Reading from the N-terminus, the 465-residue chain is Chromosomal replication initiator protein DnaA (465 aa).

The interval 1 to 84 is domain I, interacts with DnaA modulators; sequence MSLSLWQQCL…RFEVGSKPLV (84 aa). Residues 84–128 form a domain II region; that stretch reads VQTISQPAQSHHNPVSVARQQPVRMAPVRPSWDNSPVQAEHTYRS. The segment at 129–345 is domain III, AAA+ region; it reads NVNPKHTFDN…GALNRVIANA (217 aa). ATP-binding residues include Gly173, Gly175, Lys176, and Thr177. Residues 346–465 are domain IV, binds dsDNA; sequence NFTGRSITID…FSNLIRTLSS (120 aa).

It belongs to the DnaA family. In terms of assembly, oligomerizes as a right-handed, spiral filament on DNA at oriC.

It localises to the cytoplasm. In terms of biological role, plays an essential role in the initiation and regulation of chromosomal replication. ATP-DnaA binds to the origin of replication (oriC) to initiate formation of the DNA replication initiation complex once per cell cycle. Binds the DnaA box (a 9 base pair repeat at the origin) and separates the double-stranded (ds)DNA. Forms a right-handed helical filament on oriC DNA; dsDNA binds to the exterior of the filament while single-stranded (ss)DNA is stabiized in the filament's interior. The ATP-DnaA-oriC complex binds and stabilizes one strand of the AT-rich DNA unwinding element (DUE), permitting loading of DNA polymerase. After initiation quickly degrades to an ADP-DnaA complex that is not apt for DNA replication. Binds acidic phospholipids. This is Chromosomal replication initiator protein DnaA from Pectobacterium atrosepticum (strain SCRI 1043 / ATCC BAA-672) (Erwinia carotovora subsp. atroseptica).